A 278-amino-acid polypeptide reads, in one-letter code: Probable aquaporin PIP2-8 (278 aa).

The residue at position 1 (methionine 1) is an N-acetylmethionine. Over 1–36 (MSKEVSEEGRHGKDYVDPPPAPLLDMAELKLWSFYR) the chain is Cytoplasmic. Lysine 3 carries the post-translational modification N6,N6-dimethyllysine. A helical transmembrane segment spans residues 37–57 (AIIAEFIATLLFLYVTVATVI). Topologically, residues 58 to 74 (GHKNQTGPCGGVGLLGI) are extracellular. Residues 75–95 (AWAFGGMIFVLVYCTAGISGG) form a helical membrane-spanning segment. Residues 96 to 116 (HINPAVTFGLFLARKVSLPRA) lie on the Cytoplasmic side of the membrane. An NPA 1 motif is present at residues 98–100 (NPA). A helical membrane pass occupies residues 117–137 (VAYMVAQCLGAICGVGLVKAF). The Extracellular portion of the chain corresponds to 138–158 (MMTPYKRLGGGANTVADGYST). A helical transmembrane segment spans residues 159-179 (GTALGAEIIGTFVLVYTVFSA). Topologically, residues 180-192 (TDPKRSARDSHVP) are cytoplasmic. The helical transmembrane segment at 193–213 (VLAPLPIGFAVFMVHLATIPI) threads the bilayer. At 214–240 (TGTGINPARSFGAAVIYNNEKAWDDHW) the chain is on the extracellular side. The short motif at 219 to 221 (NPA) is the NPA 2 element. Residues 241–261 (IFWVGPFVGALAAAAYHQYIL) form a helical membrane-spanning segment. At 262–278 (RAAAIKALASFRSNPTN) the chain is on the cytoplasmic side. Phosphoserine occurs at positions 271 and 274.

This sequence belongs to the MIP/aquaporin (TC 1.A.8) family. PIP (TC 1.A.8.11) subfamily. Expressed in roots and floral buds.

The protein resides in the cell membrane. Functionally, aquaporins facilitate the transport of water and small neutral solutes across cell membranes. The polypeptide is Probable aquaporin PIP2-8 (PIP2-8) (Arabidopsis thaliana (Mouse-ear cress)).